The following is an 847-amino-acid chain: Glucans biosynthesis glucosyltransferase H (847 aa).

The Cytoplasmic segment spans residues 1-138 (MNKTTEYIDA…KWRTVGTIRR (138 aa)). The chain crosses the membrane as a helical span at residues 139–156 (YILLILTLAQTVVATWYM). The Periplasmic segment spans residues 157 to 193 (KTILPYQGWALINPMDMVGQDVWVSFMQLLPYMLQTG). The chain crosses the membrane as a helical span at residues 194 to 216 (ILILFAVLFCWVSAGFWTALMGF). Topologically, residues 217 to 511 (LQLLIGRDKY…LVKGMHPVHR (295 aa)) are cytoplasmic. Residues 512-534 (AVFLTGVMSYLSAPLWFMFLALS) traverse the membrane as a helical segment. At 535 to 567 (TALQVVHALTEPQYFLQPRQLFPVWPQWRPELA) the chain is on the periplasmic side. A helical membrane pass occupies residues 568–590 (IALFASTMVLLFLPKLLSILLIW). The Cytoplasmic portion of the chain corresponds to 591–602 (CKGTKEYGGFWR). A helical membrane pass occupies residues 603-625 (VTLSLLLEVLFSVLLAPVRMLFH). Topologically, residues 626–679 (TVFVVSAFLGWEVVWNSPQRDDDSTSWGEAFKRHGSQLLLGLVWAVGMAWLDLR) are periplasmic. A helical transmembrane segment spans residues 680 to 702 (FLFWLAPIVFSLILSPFVSVISS). At 703–847 (RATVGLRTKR…ALRKPDAASQ (145 aa)) the chain is on the cytoplasmic side.

The protein belongs to the glycosyltransferase 2 family. OpgH subfamily.

It is found in the cell inner membrane. It participates in glycan metabolism; osmoregulated periplasmic glucan (OPG) biosynthesis. Its function is as follows. Involved in the biosynthesis of osmoregulated periplasmic glucans (OPGs). The protein is Glucans biosynthesis glucosyltransferase H of Escherichia coli O6:H1 (strain CFT073 / ATCC 700928 / UPEC).